A 169-amino-acid chain; its full sequence is Putative hydrogenase maturation protease MJ0631 (169 aa).

The protein belongs to the peptidase A31 family.

In Methanocaldococcus jannaschii (strain ATCC 43067 / DSM 2661 / JAL-1 / JCM 10045 / NBRC 100440) (Methanococcus jannaschii), this protein is Putative hydrogenase maturation protease MJ0631.